The following is a 419-amino-acid chain: Probable sodium/metabolite cotransporter BASS2, chloroplastic (419 aa).

A chloroplast-targeting transit peptide spans 1-45 (MAASTTCPARSMASVSRALRPRPHAAIASAAVRTAARLGGGLGIV). Helical transmembrane passes span 106–126 (IVELLTTLFPVWVILGTIIGI), 137–157 (TDLFTVGLGFLMLSMGLTLTF), 170–190 (VGVGFLAQYLIKPMLGFAIAM), 194–214 (LSAPLATGLILVSCCPGGQAS), 225–245 (VALSVLMTTCSTIGAIVMTPL), 259–279 (AAGLAISTFQVVLLPTIVGVL), 291–311 (IISITPLIGVLLTTLLCASPI), 323–343 (GQLIIPVALLHVAAFALGYWL), and 384–404 (VPSAVSVVCMALGGSALAVFW).

It belongs to the bile acid:sodium symporter (BASS) (TC 2.A.28) family.

The protein localises to the membrane. Its subcellular location is the plastid. It localises to the chloroplast envelope. May function as sodium-coupled metabolite transporter across the chloroplast envelope. This Oryza sativa subsp. japonica (Rice) protein is Probable sodium/metabolite cotransporter BASS2, chloroplastic (BASS2).